The primary structure comprises 400 residues: Probable vacuolar protease A (400 aa).

The signal sequence occupies residues 1 to 18 (MKGSLLLAGATLLGCTSA). The propeptide at 19–72 (KLHSLKLKKVSLKEQLEHADIDVQIKSLGQKYMGIRPEQHEQQMFKEQTPIEAE) is activation peptide. The Peptidase A1 domain occupies 87–397 (YFSEISIGTP…DLGKGTVGLA (311 aa)). Aspartate 105 is a catalytic residue. Cysteine 118 and cysteine 123 are joined by a disulfide. The N-linked (GlcNAc...) asparagine glycan is linked to asparagine 140. Aspartate 289 is an active-site residue. Residues cysteine 323 and cysteine 356 are joined by a disulfide bond. Asparagine 340 carries an N-linked (GlcNAc...) asparagine glycan.

This sequence belongs to the peptidase A1 family.

It localises to the vacuole lumen. The protein resides in the secreted. It carries out the reaction Hydrolysis of proteins with broad specificity for peptide bonds. Cleaves -Leu-Leu-|-Val-Tyr- bond in a synthetic substrate. Does not act on esters of Tyr or Arg.. Functionally, vacuolar aspartic endopeptidase which is probably also secreted and contributes to virulence. The protein is Probable vacuolar protease A (PEP2) of Trichophyton verrucosum (strain HKI 0517).